The primary structure comprises 258 residues: Thiazole synthase 1 (258 aa).

Residue Lys-97 is the Schiff-base intermediate with DXP of the active site. Residues Gly-158, 184–185, and 206–207 contribute to the 1-deoxy-D-xylulose 5-phosphate site; these read AG and NT.

The protein belongs to the ThiG family. In terms of assembly, homotetramer. Forms heterodimers with either ThiH or ThiS.

The protein resides in the cytoplasm. The enzyme catalyses [ThiS sulfur-carrier protein]-C-terminal-Gly-aminoethanethioate + 2-iminoacetate + 1-deoxy-D-xylulose 5-phosphate = [ThiS sulfur-carrier protein]-C-terminal Gly-Gly + 2-[(2R,5Z)-2-carboxy-4-methylthiazol-5(2H)-ylidene]ethyl phosphate + 2 H2O + H(+). It functions in the pathway cofactor biosynthesis; thiamine diphosphate biosynthesis. Catalyzes the rearrangement of 1-deoxy-D-xylulose 5-phosphate (DXP) to produce the thiazole phosphate moiety of thiamine. Sulfur is provided by the thiocarboxylate moiety of the carrier protein ThiS. In vitro, sulfur can be provided by H(2)S. This is Thiazole synthase 1 from Syntrophotalea carbinolica (strain DSM 2380 / NBRC 103641 / GraBd1) (Pelobacter carbinolicus).